The chain runs to 153 residues: UPF0756 membrane protein BA_4840/GBAA_4840/BAS4489 (153 aa).

Helical transmembrane passes span 8–28 (FLFI…TVAI), 54–74 (LGVT…EIGF), 87–107 (WIAL…VQLL), and 117–137 (LVFG…GPLI).

It belongs to the UPF0756 family.

It is found in the cell membrane. The chain is UPF0756 membrane protein BA_4840/GBAA_4840/BAS4489 from Bacillus anthracis.